Consider the following 213-residue polypeptide: 3-demethoxyubiquinol 3-hydroxylase (213 aa).

Residues E62, E92, H95, E144, E176, and H179 each contribute to the Fe cation site.

It belongs to the COQ7 family. Requires Fe cation as cofactor.

The protein resides in the cell membrane. The enzyme catalyses a 5-methoxy-2-methyl-3-(all-trans-polyprenyl)benzene-1,4-diol + AH2 + O2 = a 3-demethylubiquinol + A + H2O. It functions in the pathway cofactor biosynthesis; ubiquinone biosynthesis. Its function is as follows. Catalyzes the hydroxylation of 2-nonaprenyl-3-methyl-6-methoxy-1,4-benzoquinol during ubiquinone biosynthesis. The protein is 3-demethoxyubiquinol 3-hydroxylase of Legionella pneumophila subsp. pneumophila (strain Philadelphia 1 / ATCC 33152 / DSM 7513).